Reading from the N-terminus, the 307-residue chain is Nucleotide-binding protein Arth_2083 (307 aa).

Residue 30–37 (GMSGAGRS) coordinates ATP. 81 to 84 (DVRS) is a GTP binding site.

The protein belongs to the RapZ-like family.

Displays ATPase and GTPase activities. This Arthrobacter sp. (strain FB24) protein is Nucleotide-binding protein Arth_2083.